The following is a 213-amino-acid chain: Uracil phosphoribosyltransferase (213 aa).

5-phospho-alpha-D-ribose 1-diphosphate-binding positions include Arg-78, Arg-103, and 130 to 138 (DPMLATGGS). Uracil is bound by residues Ile-193 and 198–200 (GDA). Asp-199 serves as a coordination point for 5-phospho-alpha-D-ribose 1-diphosphate.

Belongs to the UPRTase family. Mg(2+) serves as cofactor.

The enzyme catalyses UMP + diphosphate = 5-phospho-alpha-D-ribose 1-diphosphate + uracil. The protein operates within pyrimidine metabolism; UMP biosynthesis via salvage pathway; UMP from uracil: step 1/1. With respect to regulation, allosterically activated by GTP. Its function is as follows. Catalyzes the conversion of uracil and 5-phospho-alpha-D-ribose 1-diphosphate (PRPP) to UMP and diphosphate. The sequence is that of Uracil phosphoribosyltransferase from Bordetella pertussis (strain Tohama I / ATCC BAA-589 / NCTC 13251).